A 437-amino-acid chain; its full sequence is Protein arginine methyltransferase NDUFAF7 homolog, mitochondrial (437 aa).

Residues 21–49 (RPNLGATGTPKMEPPKEQPEASSKAESGH) are disordered.

This sequence belongs to the NDUFAF7 family.

It localises to the mitochondrion. It carries out the reaction L-arginyl-[protein] + 2 S-adenosyl-L-methionine = N(omega),N(omega)'-dimethyl-L-arginyl-[protein] + 2 S-adenosyl-L-homocysteine + 2 H(+). In terms of biological role, arginine methyltransferase involved in the assembly or stability of mitochondrial NADH:ubiquinone oxidoreductase complex (complex I). This is Protein arginine methyltransferase NDUFAF7 homolog, mitochondrial from Drosophila melanogaster (Fruit fly).